The primary structure comprises 290 residues: MQGRIVKSLAGFYYVESDGVVYQTRARGNFRKKGQIPYVGDWVEFSSQDQSEGYILSIEERKNSLVRPPIVNIDQAVVIMSAKEPDFNANLLDRFLVLLEYKMIQPIIYISKLDLLDDLVVIDDIREHYQNIGYVFCYSQEELLPLLADKVTVFMGQTGVGKSTLLNKIAPELKLETGEISDSLGRGRHTTRAVSFYNVHKGKIADTPGFSSLDYEVDNAEDLNESFPELRRLSHFCKFRSCTHTHEPKCAVKEALTQGQLWQVRYDNYLQFLSEIENRRETYKKVIKRK.

A CP-type G domain is found at 62-213 (KNSLVRPPIV…IADTPGFSSL (152 aa)). Residues 111–114 (SKLD) and 156–164 (GQTGVGKST) contribute to the GTP site. 4 residues coordinate Zn(2+): cysteine 237, cysteine 242, histidine 244, and cysteine 250.

Belongs to the TRAFAC class YlqF/YawG GTPase family. RsgA subfamily. As to quaternary structure, monomer. Associates with 30S ribosomal subunit, binds 16S rRNA. Requires Zn(2+) as cofactor.

The protein localises to the cytoplasm. Functionally, one of several proteins that assist in the late maturation steps of the functional core of the 30S ribosomal subunit. Helps release RbfA from mature subunits. May play a role in the assembly of ribosomal proteins into the subunit. Circularly permuted GTPase that catalyzes slow GTP hydrolysis, GTPase activity is stimulated by the 30S ribosomal subunit. The sequence is that of Small ribosomal subunit biogenesis GTPase RsgA from Streptococcus agalactiae serotype III (strain NEM316).